We begin with the raw amino-acid sequence, 89 residues long: Co-chaperonin GroES (89 aa).

Belongs to the GroES chaperonin family. Heptamer of 7 subunits arranged in a ring. Interacts with the chaperonin GroEL.

Its subcellular location is the cytoplasm. In terms of biological role, together with the chaperonin GroEL, plays an essential role in assisting protein folding. The GroEL-GroES system forms a nano-cage that allows encapsulation of the non-native substrate proteins and provides a physical environment optimized to promote and accelerate protein folding. GroES binds to the apical surface of the GroEL ring, thereby capping the opening of the GroEL channel. The sequence is that of Co-chaperonin GroES from Petrotoga mobilis (strain DSM 10674 / SJ95).